We begin with the raw amino-acid sequence, 143 residues long: Putative cytokinin riboside 5'-monophosphate phosphoribohydrolase LOG9 (143 aa).

Substrate-binding positions include 23-24 (RK), 41-47 (RYETMEE), and threonine 53.

It belongs to the LOG family.

It carries out the reaction N(6)-(dimethylallyl)adenosine 5'-phosphate + H2O = N(6)-dimethylallyladenine + D-ribose 5-phosphate. It catalyses the reaction 9-ribosyl-trans-zeatin 5'-phosphate + H2O = trans-zeatin + D-ribose 5-phosphate. Cytokinin-activating enzyme working in the direct activation pathway. Phosphoribohydrolase that converts inactive cytokinin nucleotides to the biologically active free-base forms. The protein is Putative cytokinin riboside 5'-monophosphate phosphoribohydrolase LOG9 (LOG9) of Arabidopsis thaliana (Mouse-ear cress).